We begin with the raw amino-acid sequence, 70 residues long: ATP synthase subunit c (70 aa).

The next 2 helical transmembrane spans lie at 4–24 (IATAIIIGLGALGAGIGNGLI) and 47–67 (FIGIGLVEALPIIGVAVGFLL).

The protein belongs to the ATPase C chain family. F-type ATPases have 2 components, F(1) - the catalytic core - and F(0) - the membrane proton channel. F(1) has five subunits: alpha(3), beta(3), gamma(1), delta(1), epsilon(1). F(0) has three main subunits: a(1), b(2) and c(10-14). The alpha and beta chains form an alternating ring which encloses part of the gamma chain. F(1) is attached to F(0) by a central stalk formed by the gamma and epsilon chains, while a peripheral stalk is formed by the delta and b chains.

The protein resides in the cell membrane. Its function is as follows. F(1)F(0) ATP synthase produces ATP from ADP in the presence of a proton or sodium gradient. F-type ATPases consist of two structural domains, F(1) containing the extramembraneous catalytic core and F(0) containing the membrane proton channel, linked together by a central stalk and a peripheral stalk. During catalysis, ATP synthesis in the catalytic domain of F(1) is coupled via a rotary mechanism of the central stalk subunits to proton translocation. In terms of biological role, key component of the F(0) channel; it plays a direct role in translocation across the membrane. A homomeric c-ring of between 10-14 subunits forms the central stalk rotor element with the F(1) delta and epsilon subunits. The chain is ATP synthase subunit c from Exiguobacterium sibiricum (strain DSM 17290 / CCUG 55495 / CIP 109462 / JCM 13490 / 255-15).